The following is a 476-amino-acid chain: TOM1-like protein 1 (476 aa).

The VHS domain maps to 22–154 (ATFAGVQTED…DLVKKGVQFP (133 aa)). The disordered stretch occupies residues 155 to 179 (PSEAEAETARQETAQISSNPPTSVP). The segment covering 170–179 (ISSNPPTSVP) has biased composition (polar residues). Residue S171 is modified to Phosphoserine. The 89-residue stretch at 200–288 (EQIGKLHSEL…AILGYERFTR (89 aa)) folds into the GAT domain. The segment covering 298–314 (KNQKEATNTTSEPSAPS) has biased composition (polar residues). A disordered region spans residues 298–327 (KNQKEATNTTSEPSAPSQDLLDLSPSPRMP). 3 positions are modified to phosphoserine: S314, S321, and S323. The interval 392–395 (YDNF) is interaction with GRB2. Positions 421–425 (LPPLP) match the SH3-binding motif. Positions 442 to 445 (YEVM) are interaction with PIK3R1. Y460 is subject to Phosphotyrosine. Positions 460–463 (YEEI) match the SH2-binding motif.

Belongs to the TOM1 family. As to quaternary structure, interacts with FYN, GRB2 and PIK3R1 when phosphorylated. Interacts with LYN. Post-translationally, phosphorylated on tyrosines by FYN and LYN.

The protein localises to the golgi apparatus. It localises to the golgi stack. It is found in the endosome membrane. Its subcellular location is the cytoplasm. The protein resides in the membrane. In terms of biological role, probable adapter protein involved in signaling pathways. Interacts with the SH2 and SH3 domains of various signaling proteins when it is phosphorylated. May promote FYN activation, possibly by disrupting intramolecular SH3-dependent interactions. This Homo sapiens (Human) protein is TOM1-like protein 1 (TOM1L1).